Reading from the N-terminus, the 357-residue chain is MSESGGGTVATARQRQLVERALGEWQGEVAGRVIVVTGGARGIGRSLCEGLLRAGAKVVAADLTWDDADDFRKQLESDGSGMAVDMDITDDDALDAARDAVIDRFGTVDVLVNNASLVSETLFPPTGHRNTLDTTDRDWEVMFGVNVFGTLKAIRRFIEPMRAQQRGSIVNVVSSGVLAVAAGGGYHGLRPWTVEMPYQATKAAVMALTFYLAEEVRGDGVAVNAIMPGHTRASWFDATARAFNEQGIAYFMRPAIPEHLLPISLFLAAQDSAGASGRLYYVPEWNYDHGYGDYAAWQDHELPPDMEEIYSRLEAATPSYERAGVAHLPFDAQGALYAAGMANLGAQNSWTSNDSAQ.

NADP(+) contacts are provided by residues 36-67 (VTGGARGIGRSLCEGLLRAGAKVVAADLTWDD) and Asp87. The Proton acceptor role is filled by Tyr198. NADP(+) is bound at residue Lys202.

Belongs to the short-chain dehydrogenases/reductases (SDR) family.

It carries out the reaction 9H-fluoren-9-ol + NADP(+) = 9H-fluoren-9-one + NADPH + H(+). The enzyme catalyses 9H-fluoren-9-ol + NAD(+) = 9H-fluoren-9-one + NADH + H(+). The protein operates within aromatic compound metabolism. In terms of biological role, catalyzes the dehydrogenation of both 9-fluorenol and 1,1a-dihydroxy-1-hydro-9-fluorenone to produce 9-fluorenone and 2'-carboxy-2,3- dihydroxybiphenyl, respectively. This Terrabacter sp. (strain DBF63) protein is Fluoren-9-ol dehydrogenase.